A 701-amino-acid chain; its full sequence is Elongation factor G (701 aa).

Residues 8 to 290 (SLYRNIGISA…AVVELLPAPT (283 aa)) enclose the tr-type G domain. GTP is bound by residues 17-24 (AHIDAGKT), 88-92 (DTPGH), and 142-145 (NKMD).

The protein belongs to the TRAFAC class translation factor GTPase superfamily. Classic translation factor GTPase family. EF-G/EF-2 subfamily.

The protein localises to the cytoplasm. Functionally, catalyzes the GTP-dependent ribosomal translocation step during translation elongation. During this step, the ribosome changes from the pre-translocational (PRE) to the post-translocational (POST) state as the newly formed A-site-bound peptidyl-tRNA and P-site-bound deacylated tRNA move to the P and E sites, respectively. Catalyzes the coordinated movement of the two tRNA molecules, the mRNA and conformational changes in the ribosome. This Neisseria gonorrhoeae (strain ATCC 700825 / FA 1090) protein is Elongation factor G.